Here is a 93-residue protein sequence, read N- to C-terminus: UPF0298 protein LMHCC_0506 (93 aa).

It belongs to the UPF0298 family.

It is found in the cytoplasm. The polypeptide is UPF0298 protein LMHCC_0506 (Listeria monocytogenes serotype 4a (strain HCC23)).